We begin with the raw amino-acid sequence, 987 residues long: Ras guanine nucleotide exchange factor efc25 (987 aa).

Residues 1–10 are compositionally biased toward basic and acidic residues; that stretch reads MRRPNLDRLR. Disordered stretches follow at residues 1 to 50, 100 to 130, and 529 to 552; these read MRRP…STMS, FSST…PEIR, and NANT…ISRS. The segment covering 19–39 has biased composition (low complexity); sequence TSVSKPSTPSYSTYSLSPTFS. Polar residues-rich tracts occupy residues 40 to 50, 102 to 111, and 540 to 552; these read DKSVLSPSTMS, STHSLTRQPS, and RQTN…ISRS. Residue serine 552 is modified to Phosphoserine. Residues 590 to 723 form the N-terminal Ras-GEF domain; sequence SDNNVKGGTL…VILSEIDNLW (134 aa). The 234-residue stretch at 752-985 folds into the Ras-GEF domain; that stretch reads TPEEFASQMT…FDKSLSLEPR (234 aa).

Its subcellular location is the cytoplasm. Functionally, has a role in chromosome segregation and cell morphology upstream of the ras1-scd1 pathway. Promotes the exchange of ras1-bound GDP by GTP leading to its activation. This chain is Ras guanine nucleotide exchange factor efc25 (efc25), found in Schizosaccharomyces pombe (strain 972 / ATCC 24843) (Fission yeast).